The sequence spans 207 residues: Dephospho-CoA kinase (207 aa).

In terms of domain architecture, DPCK spans 10 to 207; that stretch reads ILGLTGGIGS…FYLTLSGGQS (198 aa). 18–23 is a binding site for ATP; sequence GSGKSA.

This sequence belongs to the CoaE family.

Its subcellular location is the cytoplasm. The catalysed reaction is 3'-dephospho-CoA + ATP = ADP + CoA + H(+). Its pathway is cofactor biosynthesis; coenzyme A biosynthesis; CoA from (R)-pantothenate: step 5/5. Functionally, catalyzes the phosphorylation of the 3'-hydroxyl group of dephosphocoenzyme A to form coenzyme A. This Pseudomonas fluorescens (strain Pf0-1) protein is Dephospho-CoA kinase.